The primary structure comprises 707 residues: Leucine-rich repeat neuronal protein 3 (707 aa).

A signal peptide spans 1–22 (MKDTPLQVHVLLGLAITTLVQA). Residues 23-69 (IDKKVDCPQLCTCEIRPWFTPRSIYMEASTVDCNDLGLLNFPARLPA) form the LRRNT domain. At 23-626 (IDKKVDCPQL…DGKEYGKNHT (604 aa)) the chain is on the extracellular side. 12 LRR repeats span residues 70–91 (DTQI…TDFP), 93–114 (NLTG…NVQK), 117–138 (QLLS…CLYG), 141–162 (NLQE…AFIG), 165–186 (NLLR…WFDA), 189–210 (NLEI…NFQP), 213–234 (KLRS…ALAG), 237–258 (NLES…ALQK), 261–282 (NLKF…DFSN), 285–304 (HLKE…DSLA), 310–332 (DLRK…AFFR), and 335–358 (KLES…ESLP). N-linked (GlcNAc...) asparagine glycans are attached at residues Asn-93 and Asn-103. The N-linked (GlcNAc...) asparagine glycan is linked to Asn-223. In terms of domain architecture, LRRCT spans 368–421 (NPIRCDCVIRWINMNKTNIRFMEPDSLFCVDPPEFQGQNVRQVHFRDMMEICLP). Asn-382 carries N-linked (GlcNAc...) asparagine glycosylation. The Ig-like C2-type domain occupies 421-514 (PLIAPESFPS…DLKSIMIKVG (94 aa)). The cysteines at positions 444 and 496 are disulfide-linked. Asn-522, Asn-579, Asn-608, and Asn-624 each carry an N-linked (GlcNAc...) asparagine glycan. The Fibronectin type-III domain maps to 523–614 (GSLNIKIRDI…QCVNVTTKSL (92 aa)). The chain crosses the membrane as a helical span at residues 627-647 (VFVACVGGLLGIIGVMCLFSC). Over 648 to 707 (VSQEGSSEGEHSYAVNHCHKPALAFSELYPPLINLWESSKEKRATLEVKATAIGVPTNMS) the chain is Cytoplasmic.

As to expression, expressed in the brain, in Stronger expression in the ventricular zone and anlage of thalamus, spinal cord, and dorsal root ganglion in 11-17 dpc cerebellum and cerebral cortex in adults.

The protein resides in the membrane. The polypeptide is Leucine-rich repeat neuronal protein 3 (Lrrn3) (Mus musculus (Mouse)).